The primary structure comprises 502 residues: Cardiolipin synthase (502 aa).

A run of 3 helical transmembrane segments spans residues 7 to 27, 29 to 49, and 59 to 79; these read VAIL…FWEG, LLGL…LVIS, and IAWL…YLLF. PLD phosphodiesterase domains lie at 237-264 and 415-442; these read INFR…GDEY and EKGF…DMRS. Catalysis depends on residues His-242, Lys-244, Asp-249, His-420, Lys-422, and Asp-427.

It belongs to the phospholipase D family. Cardiolipin synthase subfamily.

The protein resides in the cell membrane. The enzyme catalyses 2 a 1,2-diacyl-sn-glycero-3-phospho-(1'-sn-glycerol) = a cardiolipin + glycerol. Its function is as follows. Catalyzes the reversible phosphatidyl group transfer from one phosphatidylglycerol molecule to another to form cardiolipin (CL) (diphosphatidylglycerol) and glycerol. The chain is Cardiolipin synthase (cls) from Geobacillus kaustophilus (strain HTA426).